A 347-amino-acid polypeptide reads, in one-letter code: O-methyltransferase aunE (347 aa).

W166 is a binding site for S-adenosyl-L-methionine. Catalysis depends on H265, which acts as the Proton acceptor.

Belongs to the class I-like SAM-binding methyltransferase superfamily. Cation-independent O-methyltransferase family.

It functions in the pathway secondary metabolite biosynthesis. In terms of biological role, O-methyltransferase; part of the gene cluster that mediates the biosynthesis of aurasperone B, a dimeric gamma-naphthopyrone. The first step in the biosynthesis of aurasperone B is the production of gamma-naphthopyrone precursor YWA1 by the non-reducing polyketide synthase albA, via condensation of one acetyl-CoA starter unit with 6 malonyl-CoA units. YWA1 is then methylated by aunE at position C-6 to yield foncesin which is further methylated at position C-8 by aunD to produce fonsecin B. A key enzyme in the biosynthetic pathway is the cytochrome P450 monooxygenase aunB which catalyzes the oxidative dimerization of fonsecin B to aurasperone B. AunB also catalyzes the oxidative dimerization of rubrofusarin B into aurasperone A. This chain is O-methyltransferase aunE, found in Aspergillus niger (strain ATCC 1015 / CBS 113.46 / FGSC A1144 / LSHB Ac4 / NCTC 3858a / NRRL 328 / USDA 3528.7).